The sequence spans 768 residues: DNA replication licensing factor MCM3 homolog 1 (768 aa).

Positions 290 to 497 constitute an MCM domain; it reads TFDLLGNSLA…IDRQISEHVA (208 aa). ATP is bound at residue 340 to 347; that stretch reads GDPSVAKS. The Arginine finger motif lies at 472-475; sequence SRFD. Positions 662–687 are disordered; the sequence is MKQQAEHDAGATGGTVDGHGSSGNDP. Over residues 672 to 682 the composition is skewed to gly residues; the sequence is ATGGTVDGHGS.

It belongs to the MCM family.

The protein resides in the nucleus. It catalyses the reaction ATP + H2O = ADP + phosphate + H(+). Its function is as follows. Acts as a factor that allows the DNA to undergo a single round of replication per cell cycle. Required for DNA replication and cell proliferation. May act as a component of the MCM complex which is the putative replicative helicase of the replication licensing system in eukaryotic cells. This Zea mays (Maize) protein is DNA replication licensing factor MCM3 homolog 1 (ROA1).